A 76-amino-acid chain; its full sequence is MNRKDIKDILIKLLVIHACVTFVFAITFLMCNVEAAIILKSLSIFTKCKYFYDNIYIIFYNIFYCIKLYFINFFVF.

The protein localises to the plastid. This is an uncharacterized protein from Euglena longa (Euglenophycean alga).